Here is a 328-residue protein sequence, read N- to C-terminus: Hairy/enhancer-of-split related with YRPW motif-like protein (328 aa).

Residues 1 to 57 are disordered; sequence MKRPKEPSGSDGESDGPIDVGQEGQLSQMARPLSTPSSSQMQARKKHRGIIEKRRRD. A compositionally biased stretch (polar residues) spans 24-42; that stretch reads GQLSQMARPLSTPSSSQMQ. Positions 42–111 are transcriptional repression and interaction with NCOR1 and SIN3A; the sequence is QARKKHRGII…GGTGFFDARA (70 aa). The 56-residue stretch at 43-98 folds into the bHLH domain; that stretch reads ARKKHRGIIEKRRRDRINSSLSELRRLVPTAFEKQGSSKLEKAEVLQMTVDHLKML. An Orange domain is found at 116-153; that stretch reads FRSIGFRECLTEVIRYLGVLEGPSSRADPVRIRLLSHL. Residues 239–308 form a disordered region; it reads SRGASSTRRA…NSSSPGPAGR (70 aa). A compositionally biased stretch (low complexity) spans 261 to 270; the sequence is APSSRAARSS.

It belongs to the HEY family. In terms of assembly, self-associates. Interacts with GATA4, GATA6, HES1, HEY1 and HEY2. Interacts with HDAC1, NCOR1 and SIN3A.

The protein localises to the nucleus. Its function is as follows. Downstream effector of Notch signaling which may be required for cardiovascular development. Transcriptional repressor which binds preferentially to the canonical E box sequence 5'-CACGTG-3'. Represses transcription by the cardiac transcriptional activators GATA4 and GATA6. In Homo sapiens (Human), this protein is Hairy/enhancer-of-split related with YRPW motif-like protein (HEYL).